The following is a 308-amino-acid chain: Protein translocase subunit SecF (308 aa).

Helical transmembrane passes span 12–32 (YFIF…TKGF), 127–147 (AKNA…YITI), 152–172 (IYAL…IGFI), 182–202 (PFIA…IVIF), 234–254 (VYTS…GGST), and 262–282 (LLVG…PLVY).

The protein belongs to the SecD/SecF family. SecF subfamily. As to quaternary structure, forms a complex with SecD. Part of the essential Sec protein translocation apparatus which comprises SecA, SecYEG and auxiliary proteins SecDF. Other proteins may also be involved.

It is found in the cell inner membrane. Part of the Sec protein translocase complex. Interacts with the SecYEG preprotein conducting channel. SecDF uses the proton motive force (PMF) to complete protein translocation after the ATP-dependent function of SecA. The chain is Protein translocase subunit SecF from Sebaldella termitidis (strain ATCC 33386 / NCTC 11300).